The following is a 165-amino-acid chain: NADH-quinone oxidoreductase subunit I (165 aa).

4Fe-4S ferredoxin-type domains follow at residues 57–86 and 96–125; these read RRYENGEERCIACKLCEAVCPALAITIESE and TRYDIDLTKCIFCGFCEESCPVDSIVETHI. [4Fe-4S] cluster contacts are provided by C66, C69, C72, C76, C105, C108, C111, and C115.

It belongs to the complex I 23 kDa subunit family. In terms of assembly, NDH-1 is composed of 14 different subunits. Subunits NuoA, H, J, K, L, M, N constitute the membrane sector of the complex. [4Fe-4S] cluster is required as a cofactor.

The protein localises to the cell inner membrane. The enzyme catalyses a quinone + NADH + 5 H(+)(in) = a quinol + NAD(+) + 4 H(+)(out). Its function is as follows. NDH-1 shuttles electrons from NADH, via FMN and iron-sulfur (Fe-S) centers, to quinones in the respiratory chain. The immediate electron acceptor for the enzyme in this species is believed to be ubiquinone. Couples the redox reaction to proton translocation (for every two electrons transferred, four hydrogen ions are translocated across the cytoplasmic membrane), and thus conserves the redox energy in a proton gradient. The sequence is that of NADH-quinone oxidoreductase subunit I from Methylibium petroleiphilum (strain ATCC BAA-1232 / LMG 22953 / PM1).